A 195-amino-acid polypeptide reads, in one-letter code: Thymidine kinase (195 aa).

ATP contacts are provided by residues Gly15–Ser22 and Asp88–Gln91. Glu89 (proton acceptor) is an active-site residue. Residues Cys145, Cys148, Cys183, and Xaa186 each contribute to the Zn(2+) site.

Belongs to the thymidine kinase family. Homotetramer.

The protein localises to the cytoplasm. The enzyme catalyses thymidine + ATP = dTMP + ADP + H(+). This is Thymidine kinase from Bacillus cereus (strain ATCC 10987 / NRS 248).